A 1209-amino-acid polypeptide reads, in one-letter code: MKIWRFLLMKKQTRLPFDNLPFYNKVMDKTAIKKLISRLIDHFGMTYTSHILDQLKTSGFKQATDTAISLGIDDLLTAPSKGWLVQDAEQQGSVSEKQNHYGNLHAVEKLRQSIEIWYATSEYLRKEMNTNFSMTDPLNPVHVMSFSGARGNTSQVHQLVGMRGLMSDPQGQIIDLPIRRNLREGLSLTEYIISCYGARKGVVDTAVRTADAGYLTRRLVEVVQQIVVRRTDCGTVQGIFVSPIRGRERDINEVVVRTQILIGRVLADDVYINRRCIATRNQDIGVGLANQLRNIRPRPIYIRTPFTCKSISRICQLCYGRSTTHSHLIELGEAVGIIAGQSIGEPGTQLTLRTFHTGGVFTGDIAEHIRAPFNGKIEFNENLVYPTRTRNGHPAYLCHNNLSITIDGQNQVQNLTIPPQSLLLVQNDQYVESEQIIAEVRARTSSFKEKVRKNIYSDLEGEMHWSTNVCHAPEYVHGNVHSILRTGYLWILSGGIYGSGVVPFPFHKYQDQVDVQPFVAKHTDSYVDQVEHRSGDSNCYGKEEQIFSYSETETDRTISNEHRDSIYVTFSPKNYNMKGKKQMNRFIVSLQCDKEWGKRIIPCPDAILRIPKSGILQINSIFGYSNVEHGIPDGPNMTTPFSLDLSREGDNLQIQISNSILYEDGERIQVMSDTSIPLVRTCLGFDWEQIDSIESEAYVSLISVRTNKIVNNMVQISLMKYPPFFMGRRDNKASSNLMFHNNLDHTNLFSSNGASQLISKHQGTICSLSNGEEDSGSFMVLSPSDCFRIVLFNDSKCYDTGNKSNRKDPMRKIIEFSGLLGHLHSITSRFPSSQFITDKKVLSKKHSIFHNYFMDENMRISHFDPCRNIISNLLGPNWCSSSSEFCKKTFPVVSLGQLIPESVWISEDEPLPESGQIIAVDEESLVIRSAKPYLATRKATVHGHYGEILDKGDTLITLIYERLKSSDIIQGLPKVEQLSEARLNNSISMNLKESFENWTGDMTRFLGSLWGLFISARITMEQSQIHLVNQIQKVYRSQGVRIGDKHIEIIVRQMTSKVLISEDGTANVFSPGELIGLSRAQRMDRALEETIYYQTMLLGITRASLNTQSFISEASFQETARVLAKAALQGRIDWLKGLKENVILGGMIPAGTGQHIHRSGKRNGIDPRIGNRNLFSNKVKDILFHHDKVSFFSIQENYHNILKQPLKES.

4 residues coordinate Zn(2+): Cys233, Cys308, Cys315, and Cys318.

Belongs to the RNA polymerase beta' chain family. RpoC2 subfamily. In plastids the minimal PEP RNA polymerase catalytic core is composed of four subunits: alpha, beta, beta', and beta''. When a (nuclear-encoded) sigma factor is associated with the core the holoenzyme is formed, which can initiate transcription. Zn(2+) serves as cofactor.

It is found in the plastid. The protein localises to the chloroplast. The enzyme catalyses RNA(n) + a ribonucleoside 5'-triphosphate = RNA(n+1) + diphosphate. In terms of biological role, DNA-dependent RNA polymerase catalyzes the transcription of DNA into RNA using the four ribonucleoside triphosphates as substrates. The polypeptide is DNA-directed RNA polymerase subunit beta'' (Pinus koraiensis (Korean pine)).